The following is a 285-amino-acid chain: Protein HEXIM1 (285 aa).

Disordered stretches follow at residues 1 to 56 and 132 to 196; these read MSEV…QNPG and LMED…LQKD. Residues 23–36 show a composition bias toward basic and acidic residues; the sequence is GGWHHPVEREEHPV. A compositionally biased stretch (acidic residues) spans 168–180; sequence TDDDLEEEEDEAG. The stretch at 213-284 forms a coiled coil; that stretch reads SKQDLIKEYL…QEGKQVAADS (72 aa).

It belongs to the HEXIM family. In terms of assembly, homooligomer and heterooligomer. Core component of the 7SK RNP complex.

The protein resides in the nucleus. The protein localises to the cytoplasm. In terms of biological role, transcriptional regulator which functions as a general RNA polymerase II transcription inhibitor. Core component of the 7SK RNP complex: in cooperation with 7SK snRNA sequesters P-TEFb in a large inactive 7SK snRNP complex preventing RNA polymerase II phosphorylation and subsequent transcriptional elongation. Plays a role in the regulation of DNA virus-mediated innate immune response by assembling into the HDP-RNP complex, a complex that serves as a platform for IRF3 phosphorylation and subsequent innate immune response activation through the cGAS-STING pathway. The chain is Protein HEXIM1 (hexim1) from Xenopus laevis (African clawed frog).